A 225-amino-acid chain; its full sequence is Leucyl/phenylalanyl-tRNA--protein transferase (225 aa).

Belongs to the L/F-transferase family.

The protein localises to the cytoplasm. It carries out the reaction N-terminal L-lysyl-[protein] + L-leucyl-tRNA(Leu) = N-terminal L-leucyl-L-lysyl-[protein] + tRNA(Leu) + H(+). The catalysed reaction is N-terminal L-arginyl-[protein] + L-leucyl-tRNA(Leu) = N-terminal L-leucyl-L-arginyl-[protein] + tRNA(Leu) + H(+). The enzyme catalyses L-phenylalanyl-tRNA(Phe) + an N-terminal L-alpha-aminoacyl-[protein] = an N-terminal L-phenylalanyl-L-alpha-aminoacyl-[protein] + tRNA(Phe). Functions in the N-end rule pathway of protein degradation where it conjugates Leu, Phe and, less efficiently, Met from aminoacyl-tRNAs to the N-termini of proteins containing an N-terminal arginine or lysine. The chain is Leucyl/phenylalanyl-tRNA--protein transferase from Nitrobacter winogradskyi (strain ATCC 25391 / DSM 10237 / CIP 104748 / NCIMB 11846 / Nb-255).